We begin with the raw amino-acid sequence, 304 residues long: Acetylglutamate kinase (304 aa).

Substrate contacts are provided by residues 70-71, arginine 92, and asparagine 185; that span reads GG.

This sequence belongs to the acetylglutamate kinase family. ArgB subfamily.

Its subcellular location is the cytoplasm. The enzyme catalyses N-acetyl-L-glutamate + ATP = N-acetyl-L-glutamyl 5-phosphate + ADP. The protein operates within amino-acid biosynthesis; L-arginine biosynthesis; N(2)-acetyl-L-ornithine from L-glutamate: step 2/4. Catalyzes the ATP-dependent phosphorylation of N-acetyl-L-glutamate. The chain is Acetylglutamate kinase from Paracoccus denitrificans (strain Pd 1222).